Reading from the N-terminus, the 132-residue chain is Small ribosomal subunit protein uS8 (132 aa).

This sequence belongs to the universal ribosomal protein uS8 family. In terms of assembly, part of the 30S ribosomal subunit. Contacts proteins S5 and S12.

Functionally, one of the primary rRNA binding proteins, it binds directly to 16S rRNA central domain where it helps coordinate assembly of the platform of the 30S subunit. This chain is Small ribosomal subunit protein uS8, found in Ehrlichia chaffeensis (strain ATCC CRL-10679 / Arkansas).